The following is a 131-amino-acid chain: Small ribosomal subunit protein uS11 (131 aa).

The protein belongs to the universal ribosomal protein uS11 family. Part of the 30S ribosomal subunit. Interacts with proteins S7 and S18. Binds to IF-3.

Its function is as follows. Located on the platform of the 30S subunit, it bridges several disparate RNA helices of the 16S rRNA. Forms part of the Shine-Dalgarno cleft in the 70S ribosome. The sequence is that of Small ribosomal subunit protein uS11 from Dictyoglomus turgidum (strain DSM 6724 / Z-1310).